The sequence spans 241 residues: Small ribosomal subunit protein uS3 (241 aa).

Positions 39–107 (IREILHKELK…DVVINIVEIR (69 aa)) constitute a KH type-2 domain. The interval 217-241 (KRMAEGETGGGGDRGGRQRRDNAAV) is disordered. Residues 230 to 241 (RGGRQRRDNAAV) are compositionally biased toward basic and acidic residues.

This sequence belongs to the universal ribosomal protein uS3 family. In terms of assembly, part of the 30S ribosomal subunit. Forms a tight complex with proteins S10 and S14.

Functionally, binds the lower part of the 30S subunit head. Binds mRNA in the 70S ribosome, positioning it for translation. In Bradyrhizobium diazoefficiens (strain JCM 10833 / BCRC 13528 / IAM 13628 / NBRC 14792 / USDA 110), this protein is Small ribosomal subunit protein uS3.